The sequence spans 417 residues: NADH-quinone oxidoreductase subunit D (417 aa).

It belongs to the complex I 49 kDa subunit family. NDH-1 is composed of 14 different subunits. Subunits NuoB, C, D, E, F, and G constitute the peripheral sector of the complex.

It localises to the cell inner membrane. It catalyses the reaction a quinone + NADH + 5 H(+)(in) = a quinol + NAD(+) + 4 H(+)(out). Functionally, NDH-1 shuttles electrons from NADH, via FMN and iron-sulfur (Fe-S) centers, to quinones in the respiratory chain. The immediate electron acceptor for the enzyme in this species is believed to be ubiquinone. Couples the redox reaction to proton translocation (for every two electrons transferred, four hydrogen ions are translocated across the cytoplasmic membrane), and thus conserves the redox energy in a proton gradient. In Burkholderia multivorans (strain ATCC 17616 / 249), this protein is NADH-quinone oxidoreductase subunit D.